The chain runs to 904 residues: Protein translocase subunit SecA (904 aa).

ATP-binding positions include glutamine 89, 107-111 (GEGKT), and aspartate 502. Residues cysteine 888, cysteine 890, cysteine 899, and histidine 900 each coordinate Zn(2+).

The protein belongs to the SecA family. Monomer and homodimer. Part of the essential Sec protein translocation apparatus which comprises SecA, SecYEG and auxiliary proteins SecDF-YajC and YidC. Requires Zn(2+) as cofactor.

The protein resides in the cell inner membrane. The protein localises to the cytoplasm. It catalyses the reaction ATP + H2O + cellular proteinSide 1 = ADP + phosphate + cellular proteinSide 2.. Part of the Sec protein translocase complex. Interacts with the SecYEG preprotein conducting channel. Has a central role in coupling the hydrolysis of ATP to the transfer of proteins into and across the cell membrane, serving both as a receptor for the preprotein-SecB complex and as an ATP-driven molecular motor driving the stepwise translocation of polypeptide chains across the membrane. The chain is Protein translocase subunit SecA from Roseobacter denitrificans (strain ATCC 33942 / OCh 114) (Erythrobacter sp. (strain OCh 114)).